Consider the following 535-residue polypeptide: Probable acyl-activating enzyme 22 (535 aa).

It belongs to the ATP-dependent AMP-binding enzyme family.

Its function is as follows. May act as an acid--thiol ligase that activates carboxylic acids by forming acyl-CoAs. The polypeptide is Probable acyl-activating enzyme 22 (AEE22) (Arabidopsis thaliana (Mouse-ear cress)).